Consider the following 232-residue polypeptide: Alpha N-terminal protein methyltransferase 1 (232 aa).

Residues G71, R76, 123–124 (MQ), and Q139 contribute to the S-adenosyl-L-methionine site.

Belongs to the methyltransferase superfamily. NTM1 family.

It localises to the cytoplasm. The catalysed reaction is N-terminal L-alanyl-L-prolyl-L-lysyl-[protein] + 3 S-adenosyl-L-methionine = N-terminal N,N,N-trimethyl-L-alanyl-L-prolyl-L-lysyl-[protein] + 3 S-adenosyl-L-homocysteine + 3 H(+). The enzyme catalyses N-terminal L-seryl-L-prolyl-L-lysyl-[protein] + 3 S-adenosyl-L-methionine = N-terminal N,N,N-trimethyl-L-seryl-L-prolyl-L-lysyl-[protein] + 3 S-adenosyl-L-homocysteine + 3 H(+). It catalyses the reaction N-terminal L-prolyl-L-prolyl-L-lysyl-[protein] + 2 S-adenosyl-L-methionine = N-terminal N,N-dimethyl-L-prolyl-L-prolyl-L-lysyl-[protein] + 2 S-adenosyl-L-homocysteine + 2 H(+). In terms of biological role, alpha-N-methyltransferase that methylates the N-terminus of target proteins containing the N-terminal motif [Ala/Pro/Ser]-Pro-Lys when the initiator Met is cleaved. Specifically catalyzes mono-, di- or tri-methylation of exposed alpha-amino group of Ala or Ser residue in the [Ala/Ser]-Pro-Lys motif and mono- or di-methylation of Pro in the Pro-Pro-Lys motif. Responsible for the N-terminal methylation of the ribosomal proteins RPL12A, RPL12B, RPS25A and RPS25B. This is Alpha N-terminal protein methyltransferase 1 (TAE1) from Saccharomyces cerevisiae (strain ATCC 204508 / S288c) (Baker's yeast).